Reading from the N-terminus, the 438-residue chain is Serine--tRNA ligase (438 aa).

245 to 247 contributes to the L-serine binding site; sequence TSE. Residue 276–278 participates in ATP binding; the sequence is RSE. Residue Glu299 participates in L-serine binding. An ATP-binding site is contributed by 363–366; that stretch reads EISS. Ser398 contacts L-serine.

Belongs to the class-II aminoacyl-tRNA synthetase family. Type-1 seryl-tRNA synthetase subfamily. Homodimer. The tRNA molecule binds across the dimer.

The protein localises to the cytoplasm. The enzyme catalyses tRNA(Ser) + L-serine + ATP = L-seryl-tRNA(Ser) + AMP + diphosphate + H(+). The catalysed reaction is tRNA(Sec) + L-serine + ATP = L-seryl-tRNA(Sec) + AMP + diphosphate + H(+). It participates in aminoacyl-tRNA biosynthesis; selenocysteinyl-tRNA(Sec) biosynthesis; L-seryl-tRNA(Sec) from L-serine and tRNA(Sec): step 1/1. Catalyzes the attachment of serine to tRNA(Ser). Is also able to aminoacylate tRNA(Sec) with serine, to form the misacylated tRNA L-seryl-tRNA(Sec), which will be further converted into selenocysteinyl-tRNA(Sec). The chain is Serine--tRNA ligase from Verminephrobacter eiseniae (strain EF01-2).